The primary structure comprises 439 residues: Serine hydroxymethyltransferase (439 aa).

(6S)-5,6,7,8-tetrahydrofolate-binding positions include Leu-134 and 138–140 (GHL). Lys-243 is subject to N6-(pyridoxal phosphate)lysine.

This sequence belongs to the SHMT family. In terms of assembly, homodimer. Requires pyridoxal 5'-phosphate as cofactor.

The protein resides in the cytoplasm. It catalyses the reaction (6R)-5,10-methylene-5,6,7,8-tetrahydrofolate + glycine + H2O = (6S)-5,6,7,8-tetrahydrofolate + L-serine. The protein operates within one-carbon metabolism; tetrahydrofolate interconversion. It participates in amino-acid biosynthesis; glycine biosynthesis; glycine from L-serine: step 1/1. Its function is as follows. Catalyzes the reversible interconversion of serine and glycine with tetrahydrofolate (THF) serving as the one-carbon carrier. This reaction serves as the major source of one-carbon groups required for the biosynthesis of purines, thymidylate, methionine, and other important biomolecules. Also exhibits THF-independent aldolase activity toward beta-hydroxyamino acids, producing glycine and aldehydes, via a retro-aldol mechanism. This chain is Serine hydroxymethyltransferase, found in Brucella anthropi (strain ATCC 49188 / DSM 6882 / CCUG 24695 / JCM 21032 / LMG 3331 / NBRC 15819 / NCTC 12168 / Alc 37) (Ochrobactrum anthropi).